Here is a 391-residue protein sequence, read N- to C-terminus: Leucine aminopeptidase 1 (391 aa).

The N-terminal stretch at 1 to 19 (MKLSIALALGATASTGVLA) is a signal peptide. A propeptide spanning residues 20 to 91 (AVVPQQEPLI…YPTLHAGSYV (72 aa)) is cleaved from the precursor. N-linked (GlcNAc...) asparagine glycosylation is present at asparagine 183. Zn(2+) is bound by residues histidine 191 and aspartate 210. An N-linked (GlcNAc...) asparagine glycan is attached at asparagine 235. Zn(2+) contacts are provided by glutamate 249 and aspartate 276. A disulfide bridge links cysteine 325 with cysteine 329. Histidine 358 serves as a coordination point for Zn(2+).

This sequence belongs to the peptidase M28 family. M28E subfamily. In terms of assembly, monomer. Zn(2+) is required as a cofactor.

The protein localises to the secreted. Its function is as follows. Extracellular aminopeptidase that allows assimilation of proteinaceous substrates. This chain is Leucine aminopeptidase 1 (lap1), found in Aspergillus niger (strain ATCC MYA-4892 / CBS 513.88 / FGSC A1513).